The sequence spans 206 residues: Sec-independent protein translocase protein TatB (206 aa).

A helical transmembrane segment spans residues 1 to 21 (MFDIGWTELLVIAVVLIVVVG). Residues 104 to 206 (ENKTEVPSAA…VQTKKKKDEA (103 aa)) form a disordered region. The span at 110–124 (PSAAMSAPTPSMSLP) shows a compositional bias: low complexity. Residues 125-138 (ETPPVVPTPAPAPE) are compositionally biased toward pro residues. Composition is skewed to low complexity over residues 139 to 151 (PAAV…AAKP) and 187 to 196 (ARKPAAPKTP).

This sequence belongs to the TatB family. The Tat system comprises two distinct complexes: a TatABC complex, containing multiple copies of TatA, TatB and TatC subunits, and a separate TatA complex, containing only TatA subunits. Substrates initially bind to the TatABC complex, which probably triggers association of the separate TatA complex to form the active translocon.

It localises to the cell inner membrane. In terms of biological role, part of the twin-arginine translocation (Tat) system that transports large folded proteins containing a characteristic twin-arginine motif in their signal peptide across membranes. Together with TatC, TatB is part of a receptor directly interacting with Tat signal peptides. TatB may form an oligomeric binding site that transiently accommodates folded Tat precursor proteins before their translocation. This is Sec-independent protein translocase protein TatB from Rhizobium etli (strain ATCC 51251 / DSM 11541 / JCM 21823 / NBRC 15573 / CFN 42).